Consider the following 88-residue polypeptide: Sec-independent protein translocase protein TatA (88 aa).

Residues 1–21 (MGSLSPWHWVVLVVVVVLLFG) form a helical membrane-spanning segment. A compositionally biased stretch (polar residues) spans 49–71 (ENQAQASALETPMQNPTVVQSQR). A disordered region spans residues 49–88 (ENQAQASALETPMQNPTVVQSQRVVPPWSTEQDHTEARPA). Positions 79-88 (EQDHTEARPA) are enriched in basic and acidic residues.

The protein belongs to the TatA/E family. The Tat system comprises two distinct complexes: a TatABC complex, containing multiple copies of TatA, TatB and TatC subunits, and a separate TatA complex, containing only TatA subunits. Substrates initially bind to the TatABC complex, which probably triggers association of the separate TatA complex to form the active translocon.

The protein resides in the cell membrane. Its function is as follows. Part of the twin-arginine translocation (Tat) system that transports large folded proteins containing a characteristic twin-arginine motif in their signal peptide across membranes. TatA could form the protein-conducting channel of the Tat system. The sequence is that of Sec-independent protein translocase protein TatA from Mycobacterium leprae (strain TN).